A 304-amino-acid polypeptide reads, in one-letter code: D-tagatose-1-phosphate kinase (304 aa).

Asp-250 acts as the Proton acceptor in catalysis.

Belongs to the carbohydrate kinase PfkB family. The cofactor is Mg(2+).

It catalyses the reaction alpha-D-tagatopyranose 1-phosphate + ATP = D-tagatofuranose 1,6-bisphosphate + ADP + H(+). The protein operates within carbohydrate degradation. Kinase involved in a D-tagatose catabolic pathway. Catalyzes the phosphorylation of D-tagatose-1-phosphate (Tag-1P) to D-tagatose-1,6-bisphosphate. This chain is D-tagatose-1-phosphate kinase, found in Klebsiella oxytoca.